The sequence spans 128 residues: Nitrogen fixation nifHD region GlnB-like protein 2 (128 aa).

It belongs to the P(II) protein family.

In terms of biological role, could be involved in the regulation of nitrogen fixation. The protein is Nitrogen fixation nifHD region GlnB-like protein 2 (glnBB) of Methanothermococcus thermolithotrophicus (Methanococcus thermolithotrophicus).